The following is a 393-amino-acid chain: Protein TsgA (393 aa).

The next 12 membrane-spanning stretches (helical) occupy residues 11 to 31, 51 to 71, 78 to 98, 101 to 121, 134 to 154, 162 to 182, 206 to 226, 245 to 265, 273 to 293, 298 to 318, 332 to 352, and 361 to 381; these read WISF…GMVM, FLNA…EIIP, FGFI…SLAL, AAMF…TFLI, LLFT…VAAF, WYWV…LTFG, IGVL…LGFI, ALVS…SFIL, ILTV…TGTQ, WFIL…ITLG, FILT…GPIV, and LLTA…LGFV.

This sequence belongs to the major facilitator superfamily. TsgA family.

It localises to the cell inner membrane. The chain is Protein TsgA from Salmonella schwarzengrund (strain CVM19633).